The sequence spans 591 residues: NADH-quinone oxidoreductase subunit C/D (591 aa).

Residues 1 to 182 are NADH dehydrogenase I subunit C; the sequence is MVTVVENTDP…TPYFLNTAKQ (182 aa). An NADH dehydrogenase I subunit D region spans residues 206 to 591; the sequence is DFMFLNIGPN…IDIVMADCDR (386 aa).

It in the N-terminal section; belongs to the complex I 30 kDa subunit family. The protein in the C-terminal section; belongs to the complex I 49 kDa subunit family. As to quaternary structure, NDH-1 is composed of 13 different subunits. Subunits NuoB, CD, E, F, and G constitute the peripheral sector of the complex.

It localises to the cell inner membrane. It carries out the reaction a quinone + NADH + 5 H(+)(in) = a quinol + NAD(+) + 4 H(+)(out). In terms of biological role, NDH-1 shuttles electrons from NADH, via FMN and iron-sulfur (Fe-S) centers, to quinones in the respiratory chain. The immediate electron acceptor for the enzyme in this species is believed to be ubiquinone. Couples the redox reaction to proton translocation (for every two electrons transferred, four hydrogen ions are translocated across the cytoplasmic membrane), and thus conserves the redox energy in a proton gradient. The protein is NADH-quinone oxidoreductase subunit C/D of Psychrobacter cryohalolentis (strain ATCC BAA-1226 / DSM 17306 / VKM B-2378 / K5).